Here is a 207-residue protein sequence, read N- to C-terminus: Outer-membrane lipoprotein carrier protein (207 aa).

The first 22 residues, 1–22, serve as a signal peptide directing secretion; sequence MKLSEKFCVFLFFLLFTSTTHA.

It belongs to the LolA family. In terms of assembly, monomer.

The protein resides in the periplasm. Its function is as follows. Participates in the translocation of lipoproteins from the inner membrane to the outer membrane. Only forms a complex with a lipoprotein if the residue after the N-terminal Cys is not an aspartate (The Asp acts as a targeting signal to indicate that the lipoprotein should stay in the inner membrane). In Nitrosospira multiformis (strain ATCC 25196 / NCIMB 11849 / C 71), this protein is Outer-membrane lipoprotein carrier protein.